The sequence spans 368 residues: Probable dual-specificity RNA methyltransferase RlmN (368 aa).

E108 (proton acceptor) is an active-site residue. Positions 114 to 345 (HAYGNSVCVS…VTVRRGLGAD (232 aa)) constitute a Radical SAM core domain. C121 and C350 are oxidised to a cystine. 3 residues coordinate [4Fe-4S] cluster: C128, C132, and C135. S-adenosyl-L-methionine is bound by residues 175–176 (GE), S207, 230–232 (SLH), and N307. Residue C350 is the S-methylcysteine intermediate of the active site.

Belongs to the radical SAM superfamily. RlmN family. It depends on [4Fe-4S] cluster as a cofactor.

It localises to the cytoplasm. The enzyme catalyses adenosine(2503) in 23S rRNA + 2 reduced [2Fe-2S]-[ferredoxin] + 2 S-adenosyl-L-methionine = 2-methyladenosine(2503) in 23S rRNA + 5'-deoxyadenosine + L-methionine + 2 oxidized [2Fe-2S]-[ferredoxin] + S-adenosyl-L-homocysteine. It carries out the reaction adenosine(37) in tRNA + 2 reduced [2Fe-2S]-[ferredoxin] + 2 S-adenosyl-L-methionine = 2-methyladenosine(37) in tRNA + 5'-deoxyadenosine + L-methionine + 2 oxidized [2Fe-2S]-[ferredoxin] + S-adenosyl-L-homocysteine. In terms of biological role, specifically methylates position 2 of adenine 2503 in 23S rRNA and position 2 of adenine 37 in tRNAs. This Pelotomaculum thermopropionicum (strain DSM 13744 / JCM 10971 / SI) protein is Probable dual-specificity RNA methyltransferase RlmN.